The sequence spans 702 residues: Polyribonucleotide nucleotidyltransferase 1 (702 aa).

Mg(2+)-binding residues include Asp483 and Asp489. Residues 550 to 609 (PQVTKLKVHPDKVREVIGAGGKVINKIIDETGVKINIENDGTIYIAAPDQESARVALEMI) form the KH domain. One can recognise an S1 motif domain in the interval 619 to 687 (GEVYTGKVIK…PQGKIGLSRK (69 aa)).

The protein belongs to the polyribonucleotide nucleotidyltransferase family. The cofactor is Mg(2+).

The protein resides in the cytoplasm. The enzyme catalyses RNA(n+1) + phosphate = RNA(n) + a ribonucleoside 5'-diphosphate. Involved in mRNA degradation. Catalyzes the phosphorolysis of single-stranded polyribonucleotides processively in the 3'- to 5'-direction. In Alkaliphilus metalliredigens (strain QYMF), this protein is Polyribonucleotide nucleotidyltransferase 1.